The following is a 74-amino-acid chain: DNA-directed RNA polymerase subunit omega (74 aa).

This sequence belongs to the RNA polymerase subunit omega family. In terms of assembly, the RNAP catalytic core consists of 2 alpha, 1 beta, 1 beta' and 1 omega subunit. When a sigma factor is associated with the core the holoenzyme is formed, which can initiate transcription.

It catalyses the reaction RNA(n) + a ribonucleoside 5'-triphosphate = RNA(n+1) + diphosphate. Its function is as follows. Promotes RNA polymerase assembly. Latches the N- and C-terminal regions of the beta' subunit thereby facilitating its interaction with the beta and alpha subunits. The chain is DNA-directed RNA polymerase subunit omega from Lactobacillus acidophilus (strain ATCC 700396 / NCK56 / N2 / NCFM).